Reading from the N-terminus, the 294-residue chain is Putative inactive magnesium transporter MRS2-8 (294 aa).

Residues 179-216 are a coiled coil; sequence KLKSSMTRLTAQVQKIKDELEQLLEDDEDMAELYLSRK.

The protein belongs to the CorA metal ion transporter (MIT) (TC 1.A.35.5) family.

The sequence is that of Putative inactive magnesium transporter MRS2-8 (MRS2-8) from Arabidopsis thaliana (Mouse-ear cress).